We begin with the raw amino-acid sequence, 182 residues long: Ribosome-recycling factor (182 aa).

The protein belongs to the RRF family.

The protein resides in the cytoplasm. Functionally, responsible for the release of ribosomes from messenger RNA at the termination of protein biosynthesis. May increase the efficiency of translation by recycling ribosomes from one round of translation to another. In Prochlorococcus marinus (strain AS9601), this protein is Ribosome-recycling factor.